Reading from the N-terminus, the 236-residue chain is Orotidine 5'-phosphate decarboxylase (236 aa).

Substrate is bound by residues D14, K36, 63-72 (DLKYHDIPNT), T122, R183, Q192, G212, and R213. The active-site Proton donor is K65.

The protein belongs to the OMP decarboxylase family. Type 1 subfamily. In terms of assembly, homodimer.

The catalysed reaction is orotidine 5'-phosphate + H(+) = UMP + CO2. The protein operates within pyrimidine metabolism; UMP biosynthesis via de novo pathway; UMP from orotate: step 2/2. In terms of biological role, catalyzes the decarboxylation of orotidine 5'-monophosphate (OMP) to uridine 5'-monophosphate (UMP). In Halorhodospira halophila (strain DSM 244 / SL1) (Ectothiorhodospira halophila (strain DSM 244 / SL1)), this protein is Orotidine 5'-phosphate decarboxylase.